Consider the following 340-residue polypeptide: Proline-rich transmembrane protein 2 (340 aa).

The tract at residues 1-261 (MAASSSEISE…AGPGVEGGEG (261 aa)) is disordered. The Cytoplasmic segment spans residues 1-268 (MAASSSEISE…GEGTQKPRDY (268 aa)). Ser-28 carries the post-translational modification Phosphoserine. Position 74 is a phosphothreonine (Thr-74). Pro residues-rich tracts occupy residues 131–155 (PPEP…PKPA) and 197–207 (APEPHSPPSKK). Position 238 is a phosphoserine (Ser-238). Arg-240 is modified (omega-N-methylarginine). Phosphoserine occurs at positions 248 and 249. An intramembrane region (helical) is located at residues 269–289 (IILAILSCFCPMWPVNIVAFA). The Cytoplasmic portion of the chain corresponds to 290–317 (YAVMSRNSLQQGDVDGAQRLGRVAKLLS). Residues 318–338 (IVALVGGVLIIIASCVINLGV) form a helical membrane-spanning segment. The Extracellular segment spans residues 339-340 (YK).

The protein belongs to the CD225/Dispanin family. In terms of assembly, component of the outer core of AMPAR complex. AMPAR complex consists of an inner core made of 4 pore-forming GluA/GRIA proteins (GRIA1, GRIA2, GRIA3 and GRIA4) and 4 major auxiliary subunits arranged in a twofold symmetry. One of the two pairs of distinct binding sites is occupied either by CNIH2, CNIH3 or CACNG2, CACNG3. The other harbors CACNG2, CACNG3, CACNG4, CACNG8 or GSG1L. This inner core of AMPAR complex is complemented by outer core constituents binding directly to the GluA/GRIA proteins at sites distinct from the interaction sites of the inner core constituents. Outer core constituents include at least PRRT1, PRRT2, CKAMP44/SHISA9, FRRS1L and NRN1. The proteins of the inner and outer core serve as a platform for other, more peripherally associated AMPAR constituents. Alone or in combination, these auxiliary subunits control the gating and pharmacology of the AMPAR complex and profoundly impact their biogenesis and protein processing. Interacts with intersectin 1/ITSN1. Interacts with SNARE complex components, including SNAP25, STX1A, SYT1 and SYT2; this interaction may inhibit SNARE complex formation.

The protein localises to the cell membrane. It localises to the presynaptic cell membrane. Its subcellular location is the synapse. It is found in the cell projection. The protein resides in the axon. The protein localises to the cytoplasmic vesicle. It localises to the secretory vesicle. Its subcellular location is the synaptic vesicle membrane. It is found in the postsynaptic density membrane. The protein resides in the dendritic spine. As a component of the outer core of AMPAR complex, may be involved in synaptic transmission in the central nervous system. In hippocampal neurons, in presynaptic terminals, plays an important role in the final steps of neurotransmitter release, possibly by regulating Ca(2+)-sensing. In the cerebellum, may inhibit SNARE complex formation and down-regulate short-term facilitation. The polypeptide is Proline-rich transmembrane protein 2 (PRRT2) (Pongo abelii (Sumatran orangutan)).